The sequence spans 150 residues: Cell division protein SepF (150 aa).

This sequence belongs to the SepF family. As to quaternary structure, homodimer. Interacts with FtsZ.

It is found in the cytoplasm. In terms of biological role, cell division protein that is part of the divisome complex and is recruited early to the Z-ring. Probably stimulates Z-ring formation, perhaps through the cross-linking of FtsZ protofilaments. Its function overlaps with FtsA. The chain is Cell division protein SepF from Clostridium kluyveri (strain NBRC 12016).